A 439-amino-acid polypeptide reads, in one-letter code: Polygalacturonase QRT2 (439 aa).

The signal sequence occupies residues 1–21 (MYEKIIILSVFLLTFLPSCFS). Positions 43 to 69 (RQHQHGHNTRNSHLKNRHGYAPRSSPR) are disordered. Residues 44 to 62 (QHQHGHNTRNSHLKNRHGY) show a composition bias toward basic residues. PbH1 repeat units lie at residues 201–250 (CNNL…HVSG) and 251–272 (TQNILIQDSIVRTGDDCISIVS). Asp265 functions as the Proton donor in the catalytic mechanism. The active site involves His288. 2 PbH1 repeats span residues 304 to 325 (VSNVVVNKATLIGTTNGVRIKT) and 333 to 354 (AKNIIFQDIIMKNVTNPIIINQ).

Belongs to the glycosyl hydrolase 28 family. In terms of tissue distribution, expressed predominantly in roots with lower expression levels in rosette leaves, flower buds and siliques. Bearly detected in seeds. Found in flowers undergoing floral organ abscission. Also expressed early in anther development, at the time of microspore separation.

Its subcellular location is the secreted. The protein localises to the cell wall. It carries out the reaction (1,4-alpha-D-galacturonosyl)n+m + H2O = (1,4-alpha-D-galacturonosyl)n + (1,4-alpha-D-galacturonosyl)m.. Functionally, polygalacturonase required for cell type-specific pectin degradation to separate microspores. Involved in anther dehiscence and floral organ abscission. This is Polygalacturonase QRT2 (QRT2) from Arabidopsis thaliana (Mouse-ear cress).